The chain runs to 392 residues: Leucine aminopeptidase 1 (392 aa).

The N-terminal stretch at 1–18 (MKFSQASLLAACLPAISA) is a signal peptide. The propeptide occupies 19-82 (RFIETAEADN…LGSTRLNAQT (64 aa)). Residue N174 is glycosylated (N-linked (GlcNAc...) asparagine). Zn(2+) contacts are provided by H182, D201, E240, and D267. C316 and C320 form a disulfide bridge. H349 is a binding site for Zn(2+).

This sequence belongs to the peptidase M28 family. M28E subfamily. Monomer. Requires Zn(2+) as cofactor.

The protein localises to the secreted. In terms of biological role, extracellular aminopeptidase that allows assimilation of proteinaceous substrates. This chain is Leucine aminopeptidase 1 (LAP1), found in Fusarium vanettenii (strain ATCC MYA-4622 / CBS 123669 / FGSC 9596 / NRRL 45880 / 77-13-4) (Fusarium solani subsp. pisi).